A 423-amino-acid chain; its full sequence is MEKTPAETTAVSAGNVPRDSIPCITNVSADTRGRTRPSRPATVPQRRPARIGHFRRRSASLSFLDWPDGSVTEGVRTTSASVAASAARFDEIRRRRQSINDEMKERTLEDALAVELVNETFRCSVTSDARKDLQKLVRRVSGTVLRLSWPNGWFFTYCDLLRVGYFGHLNIKGLEKTFLCCDKFLLPVGTVSRCEAIGRPPLPVLIGEGGRVYVYSPVVESLYLVSRSGFRGFVQEGLRNYAPLREELGYVRFETGGDVGREFMLARDLLALWRLCMKREGSIFSWRDGNEALTTVVLNGSQTYEDPAHGNWLKETCSLNVLQVFVVRAVPVESQQRLDISILVNESGAVFGVHPETRQAHFLARGLLGFFRVGFLRFCNNYCFARDCFTHPESVAPAYRATGCPRELFCRRLRKKKGLFARR.

Residues 1–12 (MEKTPAETTAVS) show a composition bias toward polar residues. The interval 1 to 46 (MEKTPAETTAVSAGNVPRDSIPCITNVSADTRGRTRPSRPATVPQR) is disordered.

It belongs to the herpesviridae US22 family.

The protein resides in the virion tegument. This Homo sapiens (Human) protein is Tegument protein UL43 (UL43).